Consider the following 288-residue polypeptide: HTH-type transcriptional regulator CzcR (288 aa).

One can recognise an HTH lysR-type domain in the interval 1-58 (MELRDLQIFQSVADQGSVSSAAKELNYVQSNVTARIKQLENELKTPLFYRHKRGMTLT). The H-T-H motif DNA-binding region spans 18–37 (VSSAAKELNYVQSNVTARIK).

Belongs to the LysR transcriptional regulatory family.

The protein is HTH-type transcriptional regulator CzcR (czcR) of Bacillus anthracis.